Here is a 334-residue protein sequence, read N- to C-terminus: Small ribosomal subunit protein uS2 (334 aa).

The protein belongs to the universal ribosomal protein uS2 family.

In Xanthobacter autotrophicus (strain ATCC BAA-1158 / Py2), this protein is Small ribosomal subunit protein uS2.